Here is a 214-residue protein sequence, read N- to C-terminus: Phosphoenolpyruvate guanylyltransferase 2 (214 aa).

Phosphoenolpyruvate-binding residues include Thr-135, Gly-150, and Ser-153.

The protein belongs to the CofC family.

It carries out the reaction phosphoenolpyruvate + GTP + H(+) = enolpyruvoyl-2-diphospho-5'-guanosine + diphosphate. Its pathway is cofactor biosynthesis; coenzyme F420 biosynthesis. Its function is as follows. Guanylyltransferase that catalyzes the activation of phosphoenolpyruvate (PEP) as enolpyruvoyl-2-diphospho-5'-guanosine, via the condensation of PEP with GTP. It is involved in the biosynthesis of coenzyme F420, a hydride carrier cofactor. In Rhodococcus jostii (strain RHA1), this protein is Phosphoenolpyruvate guanylyltransferase 2.